The chain runs to 429 residues: Prenyltransferase okaC (429 aa).

Residues Arg101, Lys189, Tyr191, Lys257, Tyr259, Tyr342, Tyr406, and Tyr410 each coordinate dimethylallyl diphosphate.

The protein belongs to the tryptophan dimethylallyltransferase family.

The catalysed reaction is cyclo(L-Trp-L-Trp) + 2 dimethylallyl diphosphate = cyclo(N(8)-(alpha,alpha-dimethylallyl)-L-Trp-6a-(alpha,alpha-dimethylallyl)-L-Trp) + 2 diphosphate. The protein operates within alkaloid biosynthesis. In terms of biological role, prenyltransferase; part of the gene cluster that mediates the biosynthesis of okaramine B, a prenylated indole alkaloid that possesses an unusual octacyclic ring system, including a four-membered azetidine ring and an eight-membered azocine ring, and that exhibits insecticidal activity against silkworm larvae. Within the pathway, okaC performs asymmetric reverse prenylation of cyclo(L-Trp-L-Trp) at N-1 and C-2' of the indole ring to produce the cyclic prenylated tryptophan dimer cyclo(N8-(alpha,alpha-dimethylallyl)-L-Trp-6a-(alpha,alpha-dime-thylallyl)-L-Trp). The biosynthesis begins with the NRPS okaA that condenses two tryptophan molecules into cyclo(L-Trp-L-Trp). Prenylation by the prenyltransferase okaC then leads to the formation of cyclo(N8-(alpha,alpha-dimethylallyl)-L-Trp-6a-(alpha,alpha-dime-thylallyl)-L-Trp). This is followed by indole 2,3-epoxidation by the FAD-dependent monooxygenase okaB to facilitate the formation of the hexahydropyrrolo[2,3-b]indole (HPI) moiety of okaramine C. The cytochrome P450 monooxygenase okaD then likely catalyzes formation of the eight-membered ring of okaramine A. The dioxygenase okaE further forms the unusual 2-dimethyl-3-methyl-azetidine ring to yield 12-deshydroxyl okaramine E, as well as the hydroxylation of 12-deshydroxyl okaramine E to produce okaramine E. The cytochrome P450 monoxygenase okaG converts 12-deshydroxyl okaramine E into 3-desmethyl okaramine B which is further methylated by the methyltransferase okaF into okaramine B. In a shunt pathway, okaG and okaF together are also able to convert okaramine E into okaramine D. Okaramine H is produced by nonenzymatic conversion from okaramine A. The protein is Prenyltransferase okaC of Penicillium ochrochloron.